The chain runs to 101 residues: Urease subunit beta (101 aa).

The protein belongs to the urease beta subunit family. Heterotrimer of UreA (gamma), UreB (beta) and UreC (alpha) subunits. Three heterotrimers associate to form the active enzyme.

It localises to the cytoplasm. It carries out the reaction urea + 2 H2O + H(+) = hydrogencarbonate + 2 NH4(+). Its pathway is nitrogen metabolism; urea degradation; CO(2) and NH(3) from urea (urease route): step 1/1. In Ralstonia pickettii (strain 12J), this protein is Urease subunit beta.